The following is a 501-amino-acid chain: Probable malate:quinone oxidoreductase (501 aa).

Belongs to the MQO family. FAD serves as cofactor.

The catalysed reaction is (S)-malate + a quinone = a quinol + oxaloacetate. It participates in carbohydrate metabolism; tricarboxylic acid cycle; oxaloacetate from (S)-malate (quinone route): step 1/1. The polypeptide is Probable malate:quinone oxidoreductase (Mycolicibacterium paratuberculosis (strain ATCC BAA-968 / K-10) (Mycobacterium paratuberculosis)).